Here is a 381-residue protein sequence, read N- to C-terminus: Alkanesulfonate monooxygenase (381 aa).

This sequence belongs to the SsuD family. As to quaternary structure, homotetramer.

The catalysed reaction is an alkanesulfonate + FMNH2 + O2 = an aldehyde + FMN + sulfite + H2O + 2 H(+). Catalyzes the desulfonation of aliphatic sulfonates. This is Alkanesulfonate monooxygenase from Escherichia coli O6:K15:H31 (strain 536 / UPEC).